We begin with the raw amino-acid sequence, 651 residues long: UvrABC system protein B (651 aa).

A Helicase ATP-binding domain is found at 25–411; the sequence is RGISCGAKEQ…TGGVATEQLI (387 aa). 38-45 provides a ligand contact to ATP; sequence GVTGSGKT. Positions 91 to 114 match the Beta-hairpin motif; the sequence is YYDYYQPEAYIPQSDVYIEKDALI. The Helicase C-terminal domain occupies 427–591; it reads DGQIHDVMCE…IVPRTIQKPV (165 aa). A disordered region spans residues 593–615; it reads TSLSERVGSSRKKVSRDTNTDPA. Residues 616 to 651 form the UVR domain; the sequence is NRDIVELQKEMLLCAENLDFERAVEIRNEIKRLTAP.

It belongs to the UvrB family. Forms a heterotetramer with UvrA during the search for lesions. Interacts with UvrC in an incision complex.

Its subcellular location is the cytoplasm. Functionally, the UvrABC repair system catalyzes the recognition and processing of DNA lesions. A damage recognition complex composed of 2 UvrA and 2 UvrB subunits scans DNA for abnormalities. Upon binding of the UvrA(2)B(2) complex to a putative damaged site, the DNA wraps around one UvrB monomer. DNA wrap is dependent on ATP binding by UvrB and probably causes local melting of the DNA helix, facilitating insertion of UvrB beta-hairpin between the DNA strands. Then UvrB probes one DNA strand for the presence of a lesion. If a lesion is found the UvrA subunits dissociate and the UvrB-DNA preincision complex is formed. This complex is subsequently bound by UvrC and the second UvrB is released. If no lesion is found, the DNA wraps around the other UvrB subunit that will check the other stand for damage. This is UvrABC system protein B from Anaplasma marginale (strain St. Maries).